The chain runs to 355 residues: Protein pelota homolog (355 aa).

This sequence belongs to the eukaryotic release factor 1 family. Pelota subfamily. Monomer. It depends on a divalent metal cation as a cofactor.

It is found in the cytoplasm. In terms of biological role, may function in recognizing stalled ribosomes, interact with stem-loop structures in stalled mRNA molecules, and effect endonucleolytic cleavage of the mRNA. May play a role in the release non-functional ribosomes and degradation of damaged mRNAs. Has endoribonuclease activity. This Haloarcula marismortui (strain ATCC 43049 / DSM 3752 / JCM 8966 / VKM B-1809) (Halobacterium marismortui) protein is Protein pelota homolog.